A 377-amino-acid chain; its full sequence is Putative FBD-associated F-box protein At5g44940 (377 aa).

The F-box domain maps to 4–50; the sequence is FDYISEFPDCLLTQILLNLPTKDSVKTSVLSKRWRNLWLNVPGLRLR. An FBD domain is found at 297-346; it reads IDFHKVPQCLISTLEYVQIEELILKEKSGIKLVDYFLENSAVLKKLTLSF.

The sequence is that of Putative FBD-associated F-box protein At5g44940 from Arabidopsis thaliana (Mouse-ear cress).